A 305-amino-acid chain; its full sequence is Putative ankyrin repeat protein RF_0580 (305 aa).

7 ANK repeats span residues Y5–E34, R39–I68, S72–L101, C107–S136, F140–A169, Y173–I202, and N206–I235.

This Rickettsia felis (strain ATCC VR-1525 / URRWXCal2) (Rickettsia azadi) protein is Putative ankyrin repeat protein RF_0580.